The chain runs to 687 residues: MEELVGLREGSSGNPVALRELWGPCPRLRRGIRGGLEWLKQKLFRVGEDWYFLMTLGVLMALISYAMNFALGRVVRAHKWLYREIGDSHLLRYLSWTVYPVALVSFSSGFSQSITPFSGGSGIPELKTILSGVVLENYLDIKNFGAKVVGLSCTLATGSTLFLGKVGPFVHLSVMIAAYLGRVRTKTIGEAENKSKQNEMLVAGAAVGVATVFAAPFSGVLFCIEVMSSHFSVWDYWRGFFAATCGAFMFRLLAVFNSEQETITSLYKTSFPVDVPFDLPEIFFFVLLGAICGVASCAYLYCQRTFLAFTKTNKLISKLMATSKPLYAALAATVLASITYPPGVGRFMASRLSMREHLDTLFDNHSWALLTRNSSPPWPAEPDPQHLWWEWYHPRFTIFGTLAFFLVMKFWMLILATTIPMPAGYFLPIFIIGAAIGRLLGEALSVAFPEGIVAGGVINPIMPGGYALAGAAAFSGAVTHSISTALLAFELTGQIVHALPVLMAVLAANAIAQSCQPSFYDGTIMVKKLPYLPWIRGRPINSHRVIVEHFMRRAISTLARDAALEQVVKVLTSTDEAEYPLVESTESQLLVGIVQRAQLVQALQAEAPARASGQQRCLQDILAGGCPTEPVTLTLSPETSLHQAHNLFELLNLRSLYVTSKGRAVGYVSWVELEKAISALTNPPPAK.

A run of 4 helical transmembrane segments spans residues 52–72, 161–181, 202–222, and 236–256; these read FLMT…FALG, LFLG…AYLG, VAGA…GVLF, and YWRG…LAVF. 4 residues coordinate Ca(2+): Glu-259, Glu-261, Asp-278, and Glu-281. 6 helical membrane passes run 282–302, 325–345, 396–416, 417–437, 452–472, and 486–506; these read IFFF…YLYC, PLYA…PGVG, FTIF…LILA, TTIP…AAIG, IVAG…AGAA, and LLAF…MAVL. Topologically, residues 507 to 687 are cytoplasmic; it reads AANAIAQSCQ…SALTNPPPAK (181 aa). 2 consecutive CBS domains span residues 551–612 and 628–686; these read MRRA…ARAS and TEPV…PPPA.

The protein belongs to the chloride channel (TC 2.A.49) family. CLCNKA subfamily. As to quaternary structure, homodimer. Interacts with BSND. Expressed predominantly in the kidney.

It localises to the basolateral cell membrane. It catalyses the reaction chloride(in) = chloride(out). The enzyme catalyses bromide(in) = bromide(out). The catalysed reaction is nitrate(in) = nitrate(out). It carries out the reaction iodide(out) = iodide(in). Anion-selective channel permeable to small monovalent anions with ion selectivity for chloride &gt; bromide &gt; nitrate &gt; iodide. Forms a homodimeric channel where each subunit has its own ion conduction pathway. May conduct double-barreled currents controlled by two types of gates, two fast gates that control each subunit independently and a slow common gate that opens and shuts off both subunits simultaneously. Assembles with the regulatory subunit BSND/Barttin for sorting at the basolateral plasma membrane domain and functional switch to the ion conducting state. CLCNKA:BSND channels display mostly a linear current-voltage relationship with fast gating at negative potentials. Mediates transepithelial chloride transport from the lumen to interstitial compartment along the thin ascending limb of Henle's loop, contributing to generation of hypertonic medullary interstitium as a countercurrent system to achieve urine concentration. Conducts chloride currents in the stria vascularis of the inner ear to establish the endocochlear potential necessary for normal hearing. This is Chloride channel protein ClC-Ka (CLCNKA) from Oryctolagus cuniculus (Rabbit).